A 214-amino-acid polypeptide reads, in one-letter code: Cytochrome b (214 aa).

Transmembrane regions (helical) follow at residues 31–51 (FGSM…FLAI), 75–96 (WIMQ…YIHI), 111–131 (WLSG…GYVL), and 176–196 (FFAL…IHIL). 2 residues coordinate heme b: His81 and His95. Heme b is bound by residues His180 and His194. His199 contacts a ubiquinone.

Belongs to the cytochrome b family. As to quaternary structure, the cytochrome bc1 complex contains 3 respiratory subunits (MT-CYB, CYC1 and UQCRFS1), 2 core proteins (UQCRC1 and UQCRC2) and probably 6 low-molecular weight proteins. Heme b is required as a cofactor.

Its subcellular location is the mitochondrion inner membrane. Its function is as follows. Component of the ubiquinol-cytochrome c reductase complex (complex III or cytochrome b-c1 complex) that is part of the mitochondrial respiratory chain. The b-c1 complex mediates electron transfer from ubiquinol to cytochrome c. Contributes to the generation of a proton gradient across the mitochondrial membrane that is then used for ATP synthesis. This is Cytochrome b (MT-CYB) from Bothrops bilineatus (Green jararaca).